An 85-amino-acid chain; its full sequence is UPF0291 protein SAK_0343 (85 aa).

The tract at residues 58 to 85 is disordered; that stretch reads GNDVTPEKLRQVQREKGLHGRSLDDPNS. The segment covering 62-85 has biased composition (basic and acidic residues); sequence TPEKLRQVQREKGLHGRSLDDPNS.

It belongs to the UPF0291 family.

It is found in the cytoplasm. The protein is UPF0291 protein SAK_0343 of Streptococcus agalactiae serotype Ia (strain ATCC 27591 / A909 / CDC SS700).